A 964-amino-acid polypeptide reads, in one-letter code: Probable outer membrane protein PmpE (964 aa).

The N-terminal stretch at 1 to 18 (MKKAFFFFLIGNSLSGLA) is a signal peptide. The 282-residue stretch at 683–964 (LTPSGHPFWG…YLNGEIALRF (282 aa)) folds into the Autotransporter domain.

It belongs to the PMP outer membrane protein family.

It localises to the secreted. The protein resides in the cell wall. The protein localises to the cell outer membrane. The chain is Probable outer membrane protein PmpE (pmpE) from Chlamydia trachomatis serovar D (strain ATCC VR-885 / DSM 19411 / UW-3/Cx).